The chain runs to 227 residues: UPF0441 protein YPO0661/y3517/YP_2976 (227 aa).

The segment at 198–227 is disordered; the sequence is GGFGESVAKQSSMQRSAATSSKTTTRSMGG. The segment covering 212 to 227 has biased composition (low complexity); that stretch reads RSAATSSKTTTRSMGG.

The protein belongs to the UPF0441 family.

This Yersinia pestis protein is UPF0441 protein YPO0661/y3517/YP_2976.